The following is a 108-amino-acid chain: uncharacterized protein (108 aa).

Intrachain disulfides connect cysteine 44/cysteine 82, cysteine 60/cysteine 78, and cysteine 63/cysteine 91.

It belongs to the arthropod CHH/MIH/GIH/VIH hormone family.

This is an uncharacterized protein from Caenorhabditis elegans.